A 462-amino-acid polypeptide reads, in one-letter code: A-type ATP synthase subunit B (462 aa).

This sequence belongs to the ATPase alpha/beta chains family. Has multiple subunits with at least A(3), B(3), C, D, E, F, H, I and proteolipid K(x).

Its subcellular location is the cell membrane. Component of the A-type ATP synthase that produces ATP from ADP in the presence of a proton gradient across the membrane. The B chain is a regulatory subunit. In Methanococcus maripaludis (strain C6 / ATCC BAA-1332), this protein is A-type ATP synthase subunit B.